A 209-amino-acid chain; its full sequence is Outer-membrane lipoprotein LolB (209 aa).

Positions 1–17 (MATVFSRALGALVLGVA) are cleaved as a signal peptide. Cys18 carries the N-palmitoyl cysteine lipid modification. Cys18 is lipidated: S-diacylglycerol cysteine.

Belongs to the LolB family. In terms of assembly, monomer.

It localises to the cell outer membrane. Functionally, plays a critical role in the incorporation of lipoproteins in the outer membrane after they are released by the LolA protein. In Ralstonia nicotianae (strain ATCC BAA-1114 / GMI1000) (Ralstonia solanacearum), this protein is Outer-membrane lipoprotein LolB.